Here is an 808-residue protein sequence, read N- to C-terminus: Phospholipase D alpha 1 (808 aa).

The C2 domain occupies 1-125 (MAHYLMHGTL…IRGDQVDRWV (125 aa)). A Ca(2+)-binding site is contributed by D186. A PLD phosphodiesterase 1 domain is found at 326–364 (TMFTHHQKIVVVDGEMPSGESQMRRIVSFVGGIDLCDGR). Active-site residues include H331, K333, and D338. H331 lines the a 1,2-diacyl-sn-glycero-3-phosphate pocket. Positions 370 and 404 each coordinate Ca(2+). The a 1,2-diacyl-sn-glycero-3-phosphate site is built by Q520 and H659. Residues 654-681 (FMIYVHTKMMIVDDEYIIVGSANINQRS) enclose the PLD phosphodiesterase 2 domain. Residues H659, K661, and D666 contribute to the active site. A Ca(2+)-binding site is contributed by E720.

It belongs to the phospholipase D family. C2-PLD subfamily. Ca(2+) serves as cofactor.

The catalysed reaction is a 1,2-diacyl-sn-glycero-3-phosphocholine + H2O = a 1,2-diacyl-sn-glycero-3-phosphate + choline + H(+). Hydrolyzes glycerol-phospholipids at the terminal phosphodiesteric bond. Plays an important role in various cellular processes. The protein is Phospholipase D alpha 1 of Carica papaya (Papaya).